Here is a 353-residue protein sequence, read N- to C-terminus: Polycomb group RING finger protein 6 (353 aa).

Residues 1-116 are disordered; it reads MDEAETDATE…FSLRLESGRA (116 aa). The span at 9-19 shows a compositional bias: basic and acidic residues; that stretch reads TENKRASEAKR. A compositionally biased stretch (pro residues) spans 23-39; that stretch reads MPPPPPPPPPISPPALI. S34 carries the post-translational modification Phosphoserine. Residues 40 to 52 show a composition bias toward low complexity; the sequence is PAPAAGEEGPASL. The segment covering 69-82 has biased composition (basic and acidic residues); sequence EPERSLGRLRGRFE. Residues 71–112 adopt a coiled-coil conformation; sequence ERSLGRLRGRFEDYDEELEEEEEMEEEEEEEEEMSHFSLRLE. Positions 83–103 are enriched in acidic residues; sequence DYDEELEEEEEMEEEEEEEEE. Position 118 is a phosphoserine (S118). The RING-type zinc-finger motif lies at 137 to 176; sequence CSICKGYLIDATTITECLHTFCKSCIVRHFYYSNRCPKCN. Glycyl lysine isopeptide (Lys-Gly) (interchain with G-Cter in SUMO2) cross-links involve residues K226 and K237.

In terms of assembly, component of a PRC1-like complex. Interacts with BMI1/PCGF4, RING1 and RNF2. Interacts with KDM5D. Interacts with CBX4, CBX6, CBX7 and CBX8. In terms of processing, phosphorylated during mitosis. Expressed in ovary, testis, stomach, liver, thymus and kidney (at protein level).

It localises to the nucleus. In terms of biological role, transcriptional repressor. May modulate the levels of histone H3K4Me3 by activating KDM5D histone demethylase. Component of a Polycomb group (PcG) multiprotein PRC1-like complex, a complex class required to maintain the transcriptionally repressive state of many genes, including Hox genes, throughout development. PcG PRC1 complex acts via chromatin remodeling and modification of histones; it mediates monoubiquitination of histone H2A 'Lys-119', rendering chromatin heritably changed in its expressibility. Within the PRC1-like complex, regulates RNF2 ubiquitin ligase activity. The polypeptide is Polycomb group RING finger protein 6 (Pcgf6) (Mus musculus (Mouse)).